The chain runs to 561 residues: Long-chain-fatty-acid--CoA ligase (561 aa).

213–224 (YTGGTTGVAKGA) provides a ligand contact to ATP.

It belongs to the ATP-dependent AMP-binding enzyme family. It depends on Mg(2+) as a cofactor.

It localises to the membrane. It carries out the reaction a long-chain fatty acid + ATP + CoA = a long-chain fatty acyl-CoA + AMP + diphosphate. Its pathway is lipid metabolism; fatty acid beta-oxidation. Catalyzes the esterification, concomitant with transport, of exogenous long-chain fatty acids into metabolically active CoA thioesters for subsequent degradation or incorporation into phospholipids. In Escherichia coli O6:H1 (strain CFT073 / ATCC 700928 / UPEC), this protein is Long-chain-fatty-acid--CoA ligase (fadD).